A 672-amino-acid chain; its full sequence is tRNA(Met) cytidine acetyltransferase TmcA (672 aa).

Residues Q180, 202-211 (GRGKSALAGQ), and R319 contribute to the ATP site. An N-acetyltransferase domain is found at 349 to 531 (IEISAFYQQA…SGCYTAMALL (183 aa)). Residues 461-463 (IAV), 468-474 (QREGIGQ), and R506 contribute to the acetyl-CoA site.

The protein belongs to the RNA cytidine acetyltransferase family. TmcA subfamily.

Its subcellular location is the cytoplasm. The catalysed reaction is cytidine(34) in elongator tRNA(Met) + acetyl-CoA + ATP + H2O = N(4)-acetylcytidine(34) in elongator tRNA(Met) + ADP + phosphate + CoA + H(+). In terms of biological role, catalyzes the formation of N(4)-acetylcytidine (ac(4)C) at the wobble position of tRNA(Met), by using acetyl-CoA as an acetyl donor and ATP (or GTP). The sequence is that of tRNA(Met) cytidine acetyltransferase TmcA from Salmonella typhimurium (strain LT2 / SGSC1412 / ATCC 700720).